The sequence spans 882 residues: DNA mismatch repair protein MutS (882 aa).

640–647 (GPNMGGKS) contributes to the ATP binding site.

The protein belongs to the DNA mismatch repair MutS family.

In terms of biological role, this protein is involved in the repair of mismatches in DNA. It is possible that it carries out the mismatch recognition step. This protein has a weak ATPase activity. This is DNA mismatch repair protein MutS from Albidiferax ferrireducens (strain ATCC BAA-621 / DSM 15236 / T118) (Rhodoferax ferrireducens).